A 99-amino-acid polypeptide reads, in one-letter code: Defensin-like protein 2 (99 aa).

Positions 1 to 30 (MAMAKKSVSSFTLIFILVLVIFEVPEIKAQ) are cleaved as a signal peptide. 4 disulfide bridges follow: Cys34–Cys86, Cys47–Cys71, Cys56–Cys81, and Cys60–Cys83. A propeptide spanning residues 94-99 (ILRGGI) is cleaved from the precursor.

It belongs to the DEFL family. Protease inhibitor I18 (RTI/MTI-2) subfamily.

Its subcellular location is the secreted. Functionally, inhibits bovine beta-trypsin and alpha-chymotrypsin on a 1:1 molar basis. The protein is Defensin-like protein 2 of Sinapis alba (White mustard).